Here is a 377-residue protein sequence, read N- to C-terminus: MAFLTKKKKFKFQTSFNLEELTAVPFVNGVLFCKVRLLDGGDFVSQSSREEVQENCVRWKKKFNFVCKMSANSATGVLDPCVCRVSVRKELKGGKTYSKLGFADLNLAEFAGSGSAARCCLLEGYDTRNTRQDNSILKVNIGMSLLSGDPCFKTPLSTVKTVSPPGQDSSLQMTCKGEGTVRSAGGTVRQNRSRQAMLSSGVFDETEQNLSSPEETPHSGHSRNSSQASQQSKISGHSSEHSRCSSMSDLTHRRNTSTSSSVSGGLSLTAEGTEPERDVKPEKPPRPIRPPLHPDRHSRRKKDSVESQPTWVDDTRIDADDIVEKIMQSQDFSDVSNNEDSHLRLFVSRDGSTTLSGIQLANRISAGVFEPVMIEIR.

The C2 NT-type domain maps to 2-145 (AFLTKKKKFK…ILKVNIGMSL (144 aa)). Polar residues-rich tracts occupy residues 160-173 (KTVSPPGQDSSLQM), 188-198 (VRQNRSRQAML), and 222-234 (SRNSSQASQQSKI). A disordered region spans residues 160-313 (KTVSPPGQDS…SVESQPTWVD (154 aa)). Positions 256-269 (TSTSSSVSGGLSLT) are enriched in low complexity. A compositionally biased stretch (basic and acidic residues) spans 274–285 (EPERDVKPEKPP).

Belongs to the EEIG family.

Its subcellular location is the nucleus. The protein resides in the cytoplasm. Its function is as follows. May be involved in osteoclast differentiation. In Xenopus laevis (African clawed frog), this protein is Early estrogen-induced gene 1 protein (eeig1).